The sequence spans 440 residues: Adenylyltransferase and sulfurtransferase UBA4 (440 aa).

Methionine 1 is modified (N-acetylmethionine). Residues glycine 77, aspartate 98, 105–109 (SNLHR), lysine 122, and 166–167 (DS) contribute to the ATP site. Zn(2+) contacts are provided by cysteine 208 and cysteine 211. Residue cysteine 225 is the Glycyl thioester intermediate; for adenylyltransferase activity of the active site. Positions 286 and 289 each coordinate Zn(2+). Serine 326 is modified (phosphoserine). The Rhodanese domain maps to 339-438 (FLAKHIFLDV…YIDDIDQTIP (100 aa)). The Cysteine persulfide intermediate; for sulfurtransferase activity role is filled by cysteine 397.

In the N-terminal section; belongs to the HesA/MoeB/ThiF family. UBA4 subfamily. Zn(2+) is required as a cofactor.

It localises to the cytoplasm. The protein localises to the cytosol. It functions in the pathway tRNA modification; 5-methoxycarbonylmethyl-2-thiouridine-tRNA biosynthesis. Functionally, plays a central role in 2-thiolation of mcm(5)S(2)U at tRNA wobble positions of cytosolic tRNA(Lys), tRNA(Glu) and tRNA(Gln). Acts by mediating the C-terminal thiocarboxylation of sulfur carrier URM1. Its N-terminus first activates URM1 as acyl-adenylate (-COAMP), then the persulfide sulfur on the catalytic cysteine is transferred to URM1 to form thiocarboxylation (-COSH) of its C-terminus. The reaction probably involves hydrogen sulfide that is generated from the persulfide intermediate and that acts as a nucleophile towards URM1. Subsequently, a transient disulfide bond is formed. Does not use thiosulfate as sulfur donor; NFS1 probably acting as a sulfur donor for thiocarboxylation reactions. Prior mcm(5) tRNA modification by the elongator complex is required for 2-thiolation. May also be involved in protein urmylation. This is Adenylyltransferase and sulfurtransferase UBA4 from Saccharomyces cerevisiae (strain RM11-1a) (Baker's yeast).